We begin with the raw amino-acid sequence, 250 residues long: 2,3-bisphosphoglycerate-dependent phosphoglycerate mutase (250 aa).

Substrate-binding positions include 10–17 (RHGESQWN), 23–24 (TG), arginine 62, 89–92 (ERHY), lysine 100, 116–117 (RR), and 185–186 (GN). The active-site Tele-phosphohistidine intermediate is histidine 11. The active-site Proton donor/acceptor is glutamate 89.

This sequence belongs to the phosphoglycerate mutase family. BPG-dependent PGAM subfamily. Homodimer.

The enzyme catalyses (2R)-2-phosphoglycerate = (2R)-3-phosphoglycerate. The protein operates within carbohydrate degradation; glycolysis; pyruvate from D-glyceraldehyde 3-phosphate: step 3/5. Functionally, catalyzes the interconversion of 2-phosphoglycerate and 3-phosphoglycerate. This Shigella boydii serotype 4 (strain Sb227) protein is 2,3-bisphosphoglycerate-dependent phosphoglycerate mutase.